The chain runs to 777 residues: Subtilisin-like protease SBT1.4 (777 aa).

The signal sequence occupies residues 1-25 (MAKLSLSSIFFVFPLLLCFFSPSSS). The propeptide at 26–110 (SSDGLESYIV…VIPDQAREIH (85 aa)) is activation peptide. The 79-residue stretch at 32-110 (SYIVHVQRSH…VIPDQAREIH (79 aa)) folds into the Inhibitor I9 domain. One can recognise a Peptidase S8 domain in the interval 115-614 (PAFLGFSQNS…AGHVDPNKAL (500 aa)). Aspartate 142 acts as the Charge relay system in catalysis. Asparagine 198 carries an N-linked (GlcNAc...) asparagine glycan. A disordered region spans residues 199–223 (GTKKHAAKESRSPRDTEGHGTHTAS). The segment covering 205–218 (AKESRSPRDTEGHG) has biased composition (basic and acidic residues). Histidine 217 functions as the Charge relay system in the catalytic mechanism. Residues asparagine 232 and asparagine 395 are each glycosylated (N-linked (GlcNAc...) asparagine). The PA domain occupies 376-461 (LSLVYSGDCG…VGAKAGDQIR (86 aa)). Serine 546 serves as the catalytic Charge relay system.

The protein belongs to the peptidase S8 family.

The protein resides in the secreted. This chain is Subtilisin-like protease SBT1.4, found in Arabidopsis thaliana (Mouse-ear cress).